The primary structure comprises 219 residues: Proteasome subunit beta type-9 (219 aa).

Residues 1-20 (MLRAGAPTAGSFRTKEVHTG) constitute a propeptide, removed in mature form. The active-site Nucleophile is the Thr-21. Residues Lys-53 and Lys-109 each carry the N6-acetyllysine modification.

The protein belongs to the peptidase T1B family. As to quaternary structure, the 26S proteasome consists of a 20S proteasome core and two 19S regulatory subunits. The 20S proteasome core is composed of 28 subunits that are arranged in four stacked rings, resulting in a barrel-shaped structure. The two end rings are each formed by seven alpha subunits, and the two central rings are each formed by seven beta subunits. The catalytic chamber with the active sites is on the inside of the barrel. Component of the immunoproteasome, where it displaces the equivalent housekeeping subunit PSMB6. Component of the spermatoproteasome, a form of the proteasome specifically found in testis. In terms of processing, autocleaved. The resulting N-terminal Thr residue of the mature subunit is responsible for the nucleophile proteolytic activity.

The protein localises to the cytoplasm. The protein resides in the nucleus. The enzyme catalyses Cleavage of peptide bonds with very broad specificity.. In terms of biological role, the proteasome is a multicatalytic proteinase complex which is characterized by its ability to cleave peptides with Arg, Phe, Tyr, Leu, and Glu adjacent to the leaving group at neutral or slightly basic pH. The proteasome has an ATP-dependent proteolytic activity. This subunit is involved in antigen processing to generate class I binding peptides. This chain is Proteasome subunit beta type-9 (Psmb9), found in Mus platythrix (Flat-haired mouse).